The following is a 557-amino-acid chain: Hemolysin transporter protein ShlB (557 aa).

The first 18 residues, 1-18, serve as a signal peptide directing secretion; it reads MIKKITALTLLVSTALSA. Residues 79 to 152 enclose the POTRA domain; that stretch reads LPIAGVYLQG…GELGLSVTEG (74 aa).

Belongs to the TPS (TC 1.B.20) family.

It is found in the cell outer membrane. In terms of biological role, interacts with the cell-bound hemolysin. Necessary for the extracellular secretion and activation of hemolysin. Member of a two partner secretion pathway (TPS) in which it mediates the secretion of hemolysin. The polypeptide is Hemolysin transporter protein ShlB (shlB) (Serratia marcescens).